The chain runs to 245 residues: Probable membrane transporter protein YdhB (245 aa).

A run of 8 helical transmembrane segments spans residues 1-21, 34-56, 71-91, 98-118, 137-157, 177-197, 199-219, and 225-245; these read MLII…GAGG, HIPI…LSGA, LIVG…TSFI, YLTA…LFIL, ILGI…APFI, MLVI…EGFV, YVLL…GAKF, and KVVL…LLLF.

This sequence belongs to the 4-toluene sulfonate uptake permease (TSUP) (TC 2.A.102) family.

It localises to the cell membrane. This Bacillus subtilis (strain 168) protein is Probable membrane transporter protein YdhB (ydhB).